The chain runs to 638 residues: Zona pellucida sperm-binding protein 1 (638 aa).

The N-terminal stretch at 1–25 (MAGGSATTWGYPVALLLLVATLGLG) is a signal peptide. Residues 26–601 (RWLQPDPGLP…DSNGNSSLRP (576 aa)) lie on the Extracellular side of the membrane. Asn76 carries an N-linked (GlcNAc...) asparagine glycan. A compositionally biased stretch (polar residues) spans 165–175 (LPTSGHTSQGS). Residues 165–208 (LPTSGHTSQGSGHAFPSPLDPGHSSVHPTPALPSPGPGPTLATL) form a disordered region. Residues 234–274 (EQCQVASGHLPCIVRRTSKEACQQAGCCYDNTREVPCYYGN) enclose the P-type domain. Intrachain disulfides connect Cys236/Cys261, Cys245/Cys260, and Cys255/Cys270. One can recognise a ZP domain in the interval 279–553 (QCFRDGYFVL…TACSTGTTRQ (275 aa)). Asn379 is a glycosylation site (N-linked (GlcNAc...) asparagine). A disulfide bond links Cys457 and Cys478. The interval 549-594 (GTTRQRRSSGHRNDTARPQDIVSSPGPVGFEDSYGQEPTLGPTDSN) is disordered. The propeptide at 554–638 (RRSSGHRNDT…AQKLWESNRQ (85 aa)) is removed in mature form. N-linked (GlcNAc...) asparagine glycans are attached at residues Asn561 and Asn596. The helical transmembrane segment at 602-622 (LLWAVLLLPAVALVLGFGVFV) threads the bilayer. At 623–638 (GLSQTWAQKLWESNRQ) the chain is on the cytoplasmic side.

This sequence belongs to the ZP domain family. ZPB subfamily. In terms of assembly, polymers of ZP2 and ZP3 organized into long filaments cross-linked by ZP1 homodimers. Interacts with ZP3. Proteolytically cleaved before the transmembrane segment to yield the secreted ectodomain incorporated in the zona pellucida. In terms of processing, O-glycosylated. In terms of tissue distribution, expressed in oocytes (at protein level).

It is found in the zona pellucida. Its subcellular location is the cell membrane. Its function is as follows. Component of the zona pellucida, an extracellular matrix surrounding oocytes which mediates sperm binding, induction of the acrosome reaction and prevents post-fertilization polyspermy. The zona pellucida is composed of 3 to 4 glycoproteins, ZP1, ZP2, ZP3, and ZP4. ZP1 ensures the structural integrity of the zona pellucida. In Homo sapiens (Human), this protein is Zona pellucida sperm-binding protein 1 (ZP1).